Here is a 443-residue protein sequence, read N- to C-terminus: Exodeoxyribonuclease 7 large subunit (443 aa).

The protein belongs to the XseA family. As to quaternary structure, heterooligomer composed of large and small subunits.

The protein localises to the cytoplasm. The enzyme catalyses Exonucleolytic cleavage in either 5'- to 3'- or 3'- to 5'-direction to yield nucleoside 5'-phosphates.. Functionally, bidirectionally degrades single-stranded DNA into large acid-insoluble oligonucleotides, which are then degraded further into small acid-soluble oligonucleotides. In Vibrio vulnificus (strain CMCP6), this protein is Exodeoxyribonuclease 7 large subunit.